The sequence spans 140 residues: uncharacterized protein (140 aa).

This is an uncharacterized protein from Mycoplasma pneumoniae (strain ATCC 29342 / M129 / Subtype 1) (Mycoplasmoides pneumoniae).